The primary structure comprises 255 residues: MAVTSKAKMYAQGLQFYYGDFKALHDIDLTFEQNQVTALIGPSGCGKSTFLRCLNRMNDLIPISRVEGVIALDGENIYDPKVDVVELRRRVGMVFQKPNPFPKTVFENVAYGLRVNGVKDREYLEEKVEQSLRHAALWDEVKDRLQDSALGLSGGQQQRLCIARALAVEPEVLLMDEPASALDPIATQKIEELIHILKQQYTIIIVTHSMQQAARVSDVTAFFYMGRLIETGATEIMFTRPRNKQTEDYITGRFG.

In terms of domain architecture, ABC transporter spans 9–250; that stretch reads MYAQGLQFYY…PRNKQTEDYI (242 aa). Position 41-48 (41-48) interacts with ATP; it reads GPSGCGKS.

This sequence belongs to the ABC transporter superfamily. Phosphate importer (TC 3.A.1.7) family. In terms of assembly, the complex is composed of two ATP-binding proteins (PstB), two transmembrane proteins (PstC and PstA) and a solute-binding protein (PstS).

It localises to the cell inner membrane. It carries out the reaction phosphate(out) + ATP + H2O = ADP + 2 phosphate(in) + H(+). Part of the ABC transporter complex PstSACB involved in phosphate import. Responsible for energy coupling to the transport system. The sequence is that of Phosphate import ATP-binding protein PstB from Nitratidesulfovibrio vulgaris (strain ATCC 29579 / DSM 644 / CCUG 34227 / NCIMB 8303 / VKM B-1760 / Hildenborough) (Desulfovibrio vulgaris).